A 208-amino-acid polypeptide reads, in one-letter code: Single-stranded DNA-binding protein DdrA (208 aa).

It belongs to the RAD52 family. Homooligomer composed of 8 to 10 subunits; probably arranged in a ring-structure.

Its function is as follows. ssDNA-binding protein that contributes to the ionizing radiation resistance of D.radiodurans. Plays a role in DNA repair and genome reconstitution, in a RecA-independent process, since DdrA is essential for recovery from severe genomic fragmentation as a result of exposure to severe levels of ionizing radiation in an environment lacking nutrients. In vitro, binds to the 3'-ends of single-stranded DNA, protecting them from nuclease degradation. Thus, DdrA is part of a DNA end-protection system that helps to preserve genome integrity following irradiation or desiccation. Does not display DNA strand annealing activity, unlike eukaryotic Rad52 protein homologs. The protein is Single-stranded DNA-binding protein DdrA (ddrA) of Deinococcus radiodurans (strain ATCC 13939 / DSM 20539 / JCM 16871 / CCUG 27074 / LMG 4051 / NBRC 15346 / NCIMB 9279 / VKM B-1422 / R1).